The sequence spans 95 residues: Exodeoxyribonuclease 7 small subunit (95 aa).

The span at 62–83 (LTKDESKKTNKTGFRGESKTTE) shows a compositional bias: basic and acidic residues. Positions 62–95 (LTKDESKKTNKTGFRGESKTTETKNNTAQEEDLF) are disordered.

The protein belongs to the XseB family. In terms of assembly, heterooligomer composed of large and small subunits.

It localises to the cytoplasm. The catalysed reaction is Exonucleolytic cleavage in either 5'- to 3'- or 3'- to 5'-direction to yield nucleoside 5'-phosphates.. In terms of biological role, bidirectionally degrades single-stranded DNA into large acid-insoluble oligonucleotides, which are then degraded further into small acid-soluble oligonucleotides. In Leptospira interrogans serogroup Icterohaemorrhagiae serovar copenhageni (strain Fiocruz L1-130), this protein is Exodeoxyribonuclease 7 small subunit.